We begin with the raw amino-acid sequence, 254 residues long: MKACSILFTTLITLAAAQKDSGSLDGQNSEDSSQKESSNSQEITPTTTKEAQESASTVVSTGKSLVQTSNVVSNTYAVAPSTTVVTTDAQGKTTTQYLWWVAESNSAVSTTSTASVQPTGETSSGITNSASSSTTSTSTDGPVTIVTTTNSLGETYTSTVWWLPSSATTDNTASSSKSSSGSSSKPESSTKVVSTIKSTYTTTSGSTVETLTTTYKSTVNGKVASVMSNSTNGAFAGTHIAYGAGAFAVGALLL.

An N-terminal signal peptide occupies residues 1 to 17 (MKACSILFTTLITLAAA). Disordered regions lie at residues 19 to 57 (KDSG…SAST), 111 to 143 (TSTA…DGPV), and 167 to 191 (ATTD…SSTK). Positions 27–42 (QNSEDSSQKESSNSQE) are enriched in low complexity. The span at 43–57 (ITPTTTKEAQESAST) shows a compositional bias: polar residues. Residues 111–139 (TSTASVQPTGETSSGITNSASSSTTSTST) are compositionally biased toward low complexity. A glycan (N-linked (GlcNAc...) asparagine) is linked at Asn-229. Asn-232 carries GPI-anchor amidated asparagine lipidation. The propeptide at 233–254 (GAFAGTHIAYGAGAFAVGALLL) is removed in mature form.

The protein localises to the cell membrane. Functionally, cell wall biogenesis protein that participates in the organization of the beta-glucan assembly. Involved in the mechanism responsible for cell tolerance to polyhexamethylene biguanide (PHMB), an antifungal agent. The polypeptide is Cell wall biogenesis protein NCW2 (Saccharomyces cerevisiae (strain ATCC 204508 / S288c) (Baker's yeast)).